A 246-amino-acid polypeptide reads, in one-letter code: Chanoclavine-I dehydrogenase easD (246 aa).

The signal sequence occupies residues 1–20; it reads MASVSSKIFAITGGASGIGA. Residues Ile18, Asp66, Arg132, Tyr169, and Lys173 each contribute to the NADP(+) site. Tyr169 serves as the catalytic Proton donor. The active-site Lowers pKa of active site Tyr is Lys173.

This sequence belongs to the short-chain dehydrogenases/reductases (SDR) family. As to quaternary structure, homotetramer.

The enzyme catalyses chanoclavine-I + NAD(+) = chanoclavine-I aldehyde + NADH + H(+). Its pathway is alkaloid biosynthesis; ergot alkaloid biosynthesis. Functionally, chanoclavine-I dehydrogenase; part of the gene cluster that mediates the biosynthesis of fungal ergot alkaloid. DmaW catalyzes the first step of ergot alkaloid biosynthesis by condensing dimethylallyl diphosphate (DMAP) and tryptophan to form 4-dimethylallyl-L-tryptophan. The second step is catalyzed by the methyltransferase easF that methylates 4-dimethylallyl-L-tryptophan in the presence of S-adenosyl-L-methionine, resulting in the formation of 4-dimethylallyl-L-abrine. The catalase easC and the FAD-dependent oxidoreductase easE then transform 4-dimethylallyl-L-abrine to chanoclavine-I which is further oxidized by easD in the presence of NAD(+), resulting in the formation of chanoclavine-I aldehyde. Chanoclavine-I aldehyde is the precursor of ergoamides and ergopeptines in Clavicipitaceae, and clavine-type alcaloids such as fumiclavine in Trichocomaceae. However, the metabolites downstream of chanoclavine-I aldehyde in Arthrodermataceae have not been identified yet. In Arthroderma benhamiae (strain ATCC MYA-4681 / CBS 112371) (Trichophyton mentagrophytes), this protein is Chanoclavine-I dehydrogenase easD.